The following is a 247-amino-acid chain: Serine/threonine-protein phosphatase 2A activator (247 aa).

The protein belongs to the PTPA-type PPIase family.

The protein resides in the cytoplasm. It carries out the reaction [protein]-peptidylproline (omega=180) = [protein]-peptidylproline (omega=0). In terms of biological role, PPIases accelerate the folding of proteins. It catalyzes the cis-trans isomerization of proline imidic peptide bonds in oligopeptides. Acts as a regulatory subunit for PP2A-like phosphatases modulating their activity or substrate specificity, probably by inducing a conformational change in the catalytic subunit, a direct target of the PPIase. Can reactivate inactive phosphatase PP2A-phosphatase methylesterase complexes (PP2Ai) in presence of ATP and Mg(2+) by dissociating the inactive form from the complex. The chain is Serine/threonine-protein phosphatase 2A activator from Encephalitozoon cuniculi (strain GB-M1) (Microsporidian parasite).